Here is a 153-residue protein sequence, read N- to C-terminus: Sperm surface protein Sp17 (153 aa).

Residues 74-117 are disordered; that stretch reads FKVPSGATESKEAPPEKSEPEKETPQEVVKEQETQVSFVEEVST. Basic and acidic residues predominate over residues 82-106; sequence ESKEAPPEKSEPEKETPQEVVKEQE. Residues 122-151 form the IQ domain; that stretch reads AAAAAVKIQAAFRGHKARKEVKIMKESSIE.

Homodimer. May interact with ROPN1. As to expression, testis- and sperm-specific.

It localises to the membrane. Sperm surface zona pellucida binding protein. Helps to bind spermatozoa to the zona pellucida with high affinity. Might function in binding zona pellucida and carbohydrates. The chain is Sperm surface protein Sp17 (SPA17) from Notamacropus eugenii (Tammar wallaby).